Consider the following 272-residue polypeptide: Exosome complex component Rrp42 (272 aa).

This sequence belongs to the RNase PH family. Rrp42 subfamily. As to quaternary structure, component of the archaeal exosome complex. Forms a hexameric ring-like arrangement composed of 3 Rrp41-Rrp42 heterodimers. The hexameric ring associates with a trimer of Rrp4 and/or Csl4 subunits.

The protein resides in the cytoplasm. Non-catalytic component of the exosome, which is a complex involved in RNA degradation. Contributes to the structuring of the Rrp41 active site. In Thermococcus onnurineus (strain NA1), this protein is Exosome complex component Rrp42.